The following is a 963-amino-acid chain: Phosphoenolpyruvate carboxylase 2 (963 aa).

Position 11 is a phosphoserine (Ser11). Catalysis depends on residues His172 and Lys599. Ser701 carries the phosphoserine modification.

This sequence belongs to the PEPCase type 1 family. Homotetramer. The cofactor is Mg(2+). In terms of tissue distribution, expressed in all plant organs, with higher levels in stems and leaves.

It localises to the cytoplasm. The enzyme catalyses oxaloacetate + phosphate = phosphoenolpyruvate + hydrogencarbonate. By light-reversible phosphorylation. Its function is as follows. Through the carboxylation of phosphoenolpyruvate (PEP) it forms oxaloacetate, a four-carbon dicarboxylic acid source for the tricarboxylic acid cycle. The polypeptide is Phosphoenolpyruvate carboxylase 2 (PPC2) (Arabidopsis thaliana (Mouse-ear cress)).